The following is a 380-amino-acid chain: MNKENNKEGQGDALRVIISGGGTGGHIFPAVSIANAIKELRPDAQILFVGAEGRMEMQRVPDAGYQIIGLPVAGFDRKHLWKNVAVLLKLVRSQWKARNIIRQFRPQVAVGVGGYASGPTLKMAGMMGVPTLIQEQNSYAGVTNKLLAQKARRICVAYDGMEKFFPANKIIMTGNPVRQNLLAEKPEREQAIRSFGLNPEKKTILILGGSLGARTINNTLIAGLQLIRRTTDVQFIWQTGKIYHQQVTEAVKAAGEIPNLFVTDFIKDMAAAYAAADLVISRAGAGSISEFCLLNKPVILVPSPNVAEDHQTKNALALVNKQAAIYVKDAEAENKLLPVALETIANAEKLSELSENIAHLALPDSAVVIAKEVIKLAQQS.

UDP-N-acetyl-alpha-D-glucosamine-binding positions include 23-25 (TGG), Asn-137, Arg-178, Ser-210, Ile-266, and Gln-311.

The protein belongs to the glycosyltransferase 28 family. MurG subfamily.

The protein resides in the cell inner membrane. The catalysed reaction is di-trans,octa-cis-undecaprenyl diphospho-N-acetyl-alpha-D-muramoyl-L-alanyl-D-glutamyl-meso-2,6-diaminopimeloyl-D-alanyl-D-alanine + UDP-N-acetyl-alpha-D-glucosamine = di-trans,octa-cis-undecaprenyl diphospho-[N-acetyl-alpha-D-glucosaminyl-(1-&gt;4)]-N-acetyl-alpha-D-muramoyl-L-alanyl-D-glutamyl-meso-2,6-diaminopimeloyl-D-alanyl-D-alanine + UDP + H(+). The protein operates within cell wall biogenesis; peptidoglycan biosynthesis. Functionally, cell wall formation. Catalyzes the transfer of a GlcNAc subunit on undecaprenyl-pyrophosphoryl-MurNAc-pentapeptide (lipid intermediate I) to form undecaprenyl-pyrophosphoryl-MurNAc-(pentapeptide)GlcNAc (lipid intermediate II). The sequence is that of UDP-N-acetylglucosamine--N-acetylmuramyl-(pentapeptide) pyrophosphoryl-undecaprenol N-acetylglucosamine transferase from Bacteroides fragilis (strain ATCC 25285 / DSM 2151 / CCUG 4856 / JCM 11019 / LMG 10263 / NCTC 9343 / Onslow / VPI 2553 / EN-2).